The following is a 317-amino-acid chain: 4-diphosphocytidyl-2-C-methyl-D-erythritol kinase (317 aa).

The active site involves K11. Residue 99–109 participates in ATP binding; it reads PVAAGLAGGST. D141 is a catalytic residue.

It belongs to the GHMP kinase family. IspE subfamily.

The catalysed reaction is 4-CDP-2-C-methyl-D-erythritol + ATP = 4-CDP-2-C-methyl-D-erythritol 2-phosphate + ADP + H(+). It functions in the pathway isoprenoid biosynthesis; isopentenyl diphosphate biosynthesis via DXP pathway; isopentenyl diphosphate from 1-deoxy-D-xylulose 5-phosphate: step 3/6. Catalyzes the phosphorylation of the position 2 hydroxy group of 4-diphosphocytidyl-2C-methyl-D-erythritol. This chain is 4-diphosphocytidyl-2-C-methyl-D-erythritol kinase, found in Trichormus variabilis (strain ATCC 29413 / PCC 7937) (Anabaena variabilis).